The chain runs to 200 residues: BREX protein BrxB (200 aa).

Belongs to the BrxB family.

BREX systems (bacteriophage exclusion) provide immunity against bacteriophage. Part of a type 1 BREX system which protects against dsDNA phage. This system allows phage adsorption but prevents phage DNA replication, without degradation of the phage DNA. Methylation of bacterial DNA by PglX guides self/non-self discrimination. When the brxA-brxB-brxC-pglX-pglZ-brxL genes are transformed into a susceptible E.coli strain (BW25113) they confer very high resistance to infection by bacteriophage VR7 and VpaE1, about 100-fold protection against lambda, T5 and T7 and no protection against RNA phage Qbeta, ssDNA phage M13 or dSDNA phage T4 and VR5. Glycosylated phage DNA is not susceptible to BREX. The BREX system does not confer resistance to lysogenic lambda phage, i.e. prophage that are integrated into the chromosomal DNA and then induced to form phage. This is BREX protein BrxB from Escherichia coli O9:H4 (strain HS).